The following is a 151-amino-acid chain: Neuroglobin (151 aa).

The 149-residue stretch at 1–149 (MERPEPELIR…VVQAMSRGWD (149 aa)) folds into the Globin domain. Residues His-64 and His-96 each contribute to the heme b site.

It belongs to the globin family. Monomer. Homodimer and homotetramer; disulfide-linked. Mainly monomeric but also detected as part of homodimers and homotetramers. Interacts with 14-3-3 proteins; regulates the phosphorylation of NGB. Could interact (ferrous form) with G-alpha(i) proteins (GTP-bound form). Phosphorylated during hypoxia by ERK1/ERK2. Phosphorylation regulates the heme pocket hexacoordination preventing the association of His-64 with the heme metal center. Thereby, promotes the access of dioxygen and nitrite to the heme and stimulates the nitrite reductase activity. Phosphorylation during hypoxia is stabilized by 14-3-3 proteins.

The protein localises to the cytoplasm. It localises to the cytosol. It is found in the mitochondrion matrix. The enzyme catalyses Fe(III)-heme b-[protein] + nitric oxide + H2O = Fe(II)-heme b-[protein] + nitrite + 2 H(+). In terms of biological role, monomeric globin with a bis-histidyl six-coordinate heme-iron atom through which it can bind dioxygen, carbon monoxide and nitric oxide. Could help transport oxygen and increase its availability to the metabolically active neuronal tissues, though its low quantity in tissues as well as its high affinity for dioxygen, which may limit its oxygen-releasing ability, argue against it. The ferrous/deoxygenated form exhibits a nitrite reductase activity and it could produce nitric oxide which in turn inhibits cellular respiration in response to hypoxia. In its ferrous/deoxygenated state, it may also exhibit GDI (Guanine nucleotide Dissociation Inhibitor) activity toward heterotrimeric G-alpha proteins, thereby regulating signal transduction to facilitate neuroprotective responses in the wake of hypoxia and associated oxidative stress. The protein is Neuroglobin of Macaca mulatta (Rhesus macaque).